A 175-amino-acid chain; its full sequence is NADH-ubiquinone oxidoreductase chain 6 (175 aa).

5 consecutive transmembrane segments (helical) span residues 1–21 (MMTY…VGFS), 25–45 (SPIY…GIVM), 47–67 (FGGS…MLVV), 88–108 (VVMG…LCVL), and 149–169 (YGVW…IVVL).

The protein belongs to the complex I subunit 6 family.

It is found in the mitochondrion membrane. The catalysed reaction is a ubiquinone + NADH + 5 H(+)(in) = a ubiquinol + NAD(+) + 4 H(+)(out). Its function is as follows. Core subunit of the mitochondrial membrane respiratory chain NADH dehydrogenase (Complex I) that is believed to belong to the minimal assembly required for catalysis. Complex I functions in the transfer of electrons from NADH to the respiratory chain. The immediate electron acceptor for the enzyme is believed to be ubiquinone. In Rhinolophus monoceros (Formosan lesser horseshoe bat), this protein is NADH-ubiquinone oxidoreductase chain 6 (MT-ND6).